We begin with the raw amino-acid sequence, 254 residues long: 3-deoxy-manno-octulosonate cytidylyltransferase (254 aa).

This sequence belongs to the KdsB family.

The protein localises to the cytoplasm. It carries out the reaction 3-deoxy-alpha-D-manno-oct-2-ulosonate + CTP = CMP-3-deoxy-beta-D-manno-octulosonate + diphosphate. Its pathway is nucleotide-sugar biosynthesis; CMP-3-deoxy-D-manno-octulosonate biosynthesis; CMP-3-deoxy-D-manno-octulosonate from 3-deoxy-D-manno-octulosonate and CTP: step 1/1. The protein operates within bacterial outer membrane biogenesis; lipopolysaccharide biosynthesis. Its function is as follows. Activates KDO (a required 8-carbon sugar) for incorporation into bacterial lipopolysaccharide in Gram-negative bacteria. The polypeptide is 3-deoxy-manno-octulosonate cytidylyltransferase (Pseudomonas fluorescens (strain SBW25)).